The following is a 182-amino-acid chain: RFKKIRRLGALPGLTSKRPRSGSDLKNQLRSGKRSQYRIRLEEKQKLRFHYGLTERQLLRYVHIAGKAKGSTGQVLLQLLEMRLDNILFRLGMASTIPGARQLVNHRHILVNGRIVDIPSYRCKPRDIITTKDKQRSKALIQNYIASSPHEELPNHLTIDPFQYKGLVNQIIDSKWIGLKIN.

Residues 82 to 143 (MRLDNILFRL…KQRSKALIQN (62 aa)) form the S4 RNA-binding domain.

It belongs to the universal ribosomal protein uS4 family. Part of the 30S ribosomal subunit. Contacts protein S5. The interaction surface between S4 and S5 is involved in control of translational fidelity.

Its subcellular location is the plastid. It localises to the chloroplast. Its function is as follows. One of the primary rRNA binding proteins, it binds directly to 16S rRNA where it nucleates assembly of the body of the 30S subunit. In terms of biological role, with S5 and S12 plays an important role in translational accuracy. This Isophysis tasmanica protein is Small ribosomal subunit protein uS4c (rps4).